Consider the following 516-residue polypeptide: Golgin-84 (516 aa).

Over 1–492 (MSSWITGLAD…TFLRRYPMMR (492 aa)) the chain is Cytoplasmic. Residues 28–80 (QTENATGSADPMRRSMTSSTQSLSTSLKSTLSPVRRSGANSSSSVKSDGGVSV) form a disordered region. Low complexity predominate over residues 42-80 (SMTSSTQSLSTSLKSTLSPVRRSGANSSSSVKSDGGVSV). 2 positions are modified to phosphoserine: S64 and S74. The stretch at 108–423 (TNELAAFKIA…KAQTQLQQNM (316 aa)) forms a coiled coil. The chain crosses the membrane as a helical; Anchor for type IV membrane protein span at residues 493–513 (VSVIVYVALLHLWVMFVLLST). Residues 514-516 (TPN) lie on the Lumenal side of the membrane.

It is found in the golgi apparatus membrane. In terms of biological role, may be involved in maintaining Golgi structure and in intra-Golgi transport. This chain is Golgin-84 (Golgin84), found in Drosophila melanogaster (Fruit fly).